The primary structure comprises 277 residues: MIIELAKNYGFCFGVKRAIKKAEQIKDAATIGPLIHNNEEISRLQKNFNVKTLENIQALSNEKKAIIRTHGITKQDLEELRKKDIEIFDATCPFVTKPQQICEQMSKEGYEVVIFGDENHPEVKGVKSYVSTKAYVVLDKKELQNIKLPNKIAVVSQTTKKPEHFMEIVNFLILKTKEVRVFNTICDATFKNQDAIKELSLKSDVMVVVGGKNSANTKQLFLIAKTNCEDSYLIETEEELKKEWFLDKKHCGISAGASTPDWIIQKVIAKIKNFKIN.

C12 is a [4Fe-4S] cluster binding site. Residues H36 and H70 each contribute to the (2E)-4-hydroxy-3-methylbut-2-enyl diphosphate site. 2 residues coordinate dimethylallyl diphosphate: H36 and H70. Isopentenyl diphosphate-binding residues include H36 and H70. Residue C92 coordinates [4Fe-4S] cluster. Position 120 (H120) interacts with (2E)-4-hydroxy-3-methylbut-2-enyl diphosphate. H120 is a binding site for dimethylallyl diphosphate. An isopentenyl diphosphate-binding site is contributed by H120. The active-site Proton donor is the E122. T158 contacts (2E)-4-hydroxy-3-methylbut-2-enyl diphosphate. C186 serves as a coordination point for [4Fe-4S] cluster. Positions 214, 216, and 258 each coordinate (2E)-4-hydroxy-3-methylbut-2-enyl diphosphate. Dimethylallyl diphosphate is bound by residues S214, N216, and S258. The isopentenyl diphosphate site is built by S214, N216, and S258.

It belongs to the IspH family. [4Fe-4S] cluster serves as cofactor.

The catalysed reaction is isopentenyl diphosphate + 2 oxidized [2Fe-2S]-[ferredoxin] + H2O = (2E)-4-hydroxy-3-methylbut-2-enyl diphosphate + 2 reduced [2Fe-2S]-[ferredoxin] + 2 H(+). It carries out the reaction dimethylallyl diphosphate + 2 oxidized [2Fe-2S]-[ferredoxin] + H2O = (2E)-4-hydroxy-3-methylbut-2-enyl diphosphate + 2 reduced [2Fe-2S]-[ferredoxin] + 2 H(+). The protein operates within isoprenoid biosynthesis; dimethylallyl diphosphate biosynthesis; dimethylallyl diphosphate from (2E)-4-hydroxy-3-methylbutenyl diphosphate: step 1/1. It participates in isoprenoid biosynthesis; isopentenyl diphosphate biosynthesis via DXP pathway; isopentenyl diphosphate from 1-deoxy-D-xylulose 5-phosphate: step 6/6. Catalyzes the conversion of 1-hydroxy-2-methyl-2-(E)-butenyl 4-diphosphate (HMBPP) into a mixture of isopentenyl diphosphate (IPP) and dimethylallyl diphosphate (DMAPP). Acts in the terminal step of the DOXP/MEP pathway for isoprenoid precursor biosynthesis. The chain is 4-hydroxy-3-methylbut-2-enyl diphosphate reductase from Campylobacter jejuni subsp. jejuni serotype O:23/36 (strain 81-176).